Reading from the N-terminus, the 295-residue chain is MAHINEIKLRMKSIRETRQITNAMKLISAAKLKKAKKQLEKASPYFEKVRSTMADILLRSGKIENKYFHARDEKTDKKKAYIVITGEKGFAGGYNHNIIKFTEECLKQDKDPLLFVAGNVGRNHFLKNKYNVYMEFDYPVQNPSIYMAREIMEVILDLFDKEVFDELYIIYTHMFSNIKMEPSIIKLLPLELDTLKEKLQINESTEKIVDGCMEYEPDPEYVFNVLVRKYIKGVVYGAFVESFTSEQNSRMTAMDNATANANDMLKKLDLLYNRARQSKITQDITEIVGGAEALK.

The protein belongs to the ATPase gamma chain family. F-type ATPases have 2 components, CF(1) - the catalytic core - and CF(0) - the membrane proton channel. CF(1) has five subunits: alpha(3), beta(3), gamma(1), delta(1), epsilon(1). CF(0) has three main subunits: a, b and c.

The protein localises to the cell membrane. Its function is as follows. Produces ATP from ADP in the presence of a proton gradient across the membrane. The gamma chain is believed to be important in regulating ATPase activity and the flow of protons through the CF(0) complex. This is ATP synthase gamma chain from Acetivibrio thermocellus (strain ATCC 27405 / DSM 1237 / JCM 9322 / NBRC 103400 / NCIMB 10682 / NRRL B-4536 / VPI 7372) (Clostridium thermocellum).